A 405-amino-acid polypeptide reads, in one-letter code: G1/S-specific cyclin-D (405 aa).

The Cyclin N-terminal domain maps to 76–200 (FYNCMEYEEA…LIVTTLQWET (125 aa)). Positions 301-405 (YTSEDAEKTE…STPPKIFKTL (105 aa)) are disordered. The segment covering 311-321 (PTPSAPASTQE) has biased composition (polar residues). Residues 326-335 (QELKELKEEP) show a composition bias toward basic and acidic residues. The segment covering 358-380 (SEQTPSTPLNDSGFSSDVSSPAS) has biased composition (polar residues).

This sequence belongs to the cyclin family. Cyclin D subfamily. In terms of assembly, interacts with cdk-4; the interaction is likely involved in regulating cdk-4 activity.

In association with cdk-4, regulates the progression through the G1 phase of the cell cycle during postembryonic development. Regulates proliferation of the coelomocyte lineage and intestinal cells during late embryogenesis. In complex with cdk-4, involved in sex determination during gonadogenesis by regulating the asymmetric division of the somatic gonadal precursor cell (SGP). The chain is G1/S-specific cyclin-D from Caenorhabditis elegans.